Here is a 476-residue protein sequence, read N- to C-terminus: MSYEERANAHPNLGDESDVEEEALVNDYREQVNFDDSMSELDRTTSLGAGSQTQDLQAQLAAAATPLEYQATLETKFASYDNYCSLFHYILNSDGPVELEVPSYYWAWDVIDEFIYQFESFCRYRNRVARSGSNEEEAQLLRENPNTWGCYSVLNVLYSLIQRSQINEQLAAIKRGEDPMAFAGEYGSRPLYKMLGYFSIIGLLRVHCLLGDFSLALKTLDDIEMNKKAMFARVMAAHFTTYYYVGFSYMMMRRYGDAIRMFSHILVYVSRTKNFQKGGNSYDAIAKKNDQMYALIAICVALHPTRLDDTIHSALREKYGEQLHRLQHGGPEALPLFEELFRSACPKFISPTPPDFDNPSVNVDPVDHHTAIFMDEVKNTLYNPTIRSYLKLYTTMDLQKLAGFLEVEPEKLRSWLLVNKQRSRQVRWVEGGLLEGEPVAANDLDYALENDLIHVSETKAGRRLVDWYLRNLARVY.

The PCI domain occupies 257–452 (DAIRMFSHIL…DLDYALENDL (196 aa)).

It belongs to the eIF-3 subunit L family. In terms of assembly, component of the eukaryotic translation initiation factor 3 (eIF-3) complex.

Its subcellular location is the cytoplasm. In terms of biological role, component of the eukaryotic translation initiation factor 3 (eIF-3) complex, which is involved in protein synthesis of a specialized repertoire of mRNAs and, together with other initiation factors, stimulates binding of mRNA and methionyl-tRNAi to the 40S ribosome. The eIF-3 complex specifically targets and initiates translation of a subset of mRNAs involved in cell proliferation. The protein is Eukaryotic translation initiation factor 3 subunit L of Aspergillus oryzae (strain ATCC 42149 / RIB 40) (Yellow koji mold).